A 604-amino-acid polypeptide reads, in one-letter code: Siderophore iron transporter mirB (604 aa).

Residues 1 to 61 (MTIGSKFSLL…DNSSDEALPS (61 aa)) are disordered. The next 14 membrane-spanning stretches (helical) occupy residues 73–95 (AVTL…LVTL), 115–137 (FQSH…ALYI), 149–168 (AEGW…MMAA), 178–200 (ADVF…AADI), 207–224 (GIAF…AFAG), 237–259 (WRWG…YFVL), 289–311 (YFFA…FLLP), 326–343 (YIIA…LFVL), 363–385 (TVLG…NSYF), 400–422 (AGYV…GFAI), 427–449 (YFRW…MIHF), 454–476 (QYIG…FVLL), 489–511 (YVAA…GNAI), and 566–588 (AQAR…MFMV).

It belongs to the major facilitator superfamily.

It is found in the membrane. Functionally, involved in the transport of siderophore triacestylfusarinine C and so has a role in iron homeostasis. This chain is Siderophore iron transporter mirB (mirB), found in Emericella nidulans (strain FGSC A4 / ATCC 38163 / CBS 112.46 / NRRL 194 / M139) (Aspergillus nidulans).